We begin with the raw amino-acid sequence, 274 residues long: Syntaxin-12 (274 aa).

Disordered regions lie at residues 1–20 (MSYGPLDMYRNPGPSGPQPR) and 128–147 (EKESIARARAGSRLSAEDRQ). An N-acetylserine modification is found at Ser2. The Cytoplasmic segment spans residues 2–250 (SYGPLDMYRN…AYYQKKSRKK (249 aa)). Positions 33 to 130 (IQRISQATAQ…QRKVSEKEKE (98 aa)) form a coiled coil. Residues Ser139, Ser142, Ser218, and Ser225 each carry the phosphoserine modification. Positions 178–240 (LELIKERETA…ERATDQLQRA (63 aa)) constitute a t-SNARE coiled-coil homology domain. A helical; Anchor for type IV membrane protein transmembrane segment spans residues 251 to 271 (MCILVLVLSVIVTVLVVVIWV). At 272-274 (ASK) the chain is on the vesicular side.

The protein belongs to the syntaxin family. In terms of assembly, associates with the BLOC-1 complex. Interacts with BLOC1S6. Interacts with NAPA and SNAP23. Identified in a complex containing STX6, STX12, VAMP4 and VTI1A. Interacts with GRIPAP1. Forms a complex with GRIP1, GRIA2 and NSG1; controls the intracellular fate of AMPAR and the endosomal sorting of the GRIA2 subunit toward recycling and membrane targeting. Interacts with NSG1. Interacts with TPC1. Interacts (via N-terminus) with VPS13B.

It localises to the endosome membrane. The protein localises to the golgi apparatus membrane. Its subcellular location is the endomembrane system. It is found in the early endosome membrane. The protein resides in the recycling endosome membrane. Functionally, SNARE promoting fusion of transport vesicles with target membranes. Together with SNARE STX6, promotes movement of vesicles from endosomes to the cell membrane, and may therefore function in the endocytic recycling pathway. Through complex formation with GRIP1, GRIA2 and NSG1 controls the intracellular fate of AMPAR and the endosomal sorting of the GRIA2 subunit toward recycling and membrane targeting. The polypeptide is Syntaxin-12 (Stx12) (Mus musculus (Mouse)).